A 238-amino-acid chain; its full sequence is Opacity protein opA66 (238 aa).

A signal peptide is located at residue alanine 1. 2 disordered regions span residues 88–109 and 162–183; these read NLQR…QENG and GARG…AHQE. The segment covering 168-183 has biased composition (polar residues); the sequence is PTVSSPYKNTQDAHQE.

Belongs to the opacity porin family.

It is found in the cell outer membrane. Implicated in a number of adherence functions. OPA proteins are implicated in pathogenesis and are subject to phase variation. This is Opacity protein opA66 from Neisseria gonorrhoeae.